Here is a 513-residue protein sequence, read N- to C-terminus: Ankyrin repeat-containing protein YIL001W (513 aa).

ANK repeat units lie at residues 8 to 37 (KNFEELCYSCRTGDMDNVDRLISTGVNVNS) and 41 to 70 (FDNSPLFLASLCGHEAVVKLLLQRGAVCDR). 2 consecutive BTB domains span residues 122 to 179 (RDIT…KFLY) and 274 to 360 (PDVQ…DIPW).

In Saccharomyces cerevisiae (strain ATCC 204508 / S288c) (Baker's yeast), this protein is Ankyrin repeat-containing protein YIL001W.